Consider the following 286-residue polypeptide: uncharacterized protein (286 aa).

It belongs to the methyltransferase superfamily.

Its function is as follows. Involved in osmoadaptation. This is an uncharacterized protein from Emericella nidulans (strain FGSC A4 / ATCC 38163 / CBS 112.46 / NRRL 194 / M139) (Aspergillus nidulans).